The sequence spans 170 residues: Peptidyl-prolyl cis-trans isomerase ESS1 (170 aa).

A WW domain is found at 9–43 (TGLPTPWTVRYSKSKKREYFFNPETKHSQWEEPEG). The segment at 30-53 (NPETKHSQWEEPEGTNKDQLHKHL) is disordered. Basic and acidic residues predominate over residues 32–53 (ETKHSQWEEPEGTNKDQLHKHL). In terms of domain architecture, PpiC spans 57 to 170 (PVRVRCLHIL…SGVHVIKRVG (114 aa)). Phosphoserine is present on Ser161.

This sequence belongs to the PpiC/parvulin rotamase family. In terms of assembly, interacts with the RNA polymerase II largest subunit (RPB1) and with the SIN1-RDP3 HDAC subunit SIN3.

Its subcellular location is the cytoplasm. The protein localises to the nucleus. The catalysed reaction is [protein]-peptidylproline (omega=180) = [protein]-peptidylproline (omega=0). With respect to regulation, inhibited by 5-hydroxy-1,4-naphthoquinone (juglone), but not by FK506 or cyclosporin A. Essential PPIase specific for phosphoserine and phosphothreonine N-terminal to the proline residue. Required for efficient pre-mRNA 3'-end processing and transcription termination, probably by inducing conformational changes by proline-directed isomerization in the C-terminal domain (CTD) of RPB1, thereby altering cofactor binding with the RNA polymerase II transcription complex. Also targets the SIN3-RPD3 histone deacetylase complex (HDAC). The sequence is that of Peptidyl-prolyl cis-trans isomerase ESS1 (ESS1) from Saccharomyces cerevisiae (strain ATCC 204508 / S288c) (Baker's yeast).